Reading from the N-terminus, the 151-residue chain is D-aminoacyl-tRNA deacylase (151 aa).

Positions 136 to 137 (GP) match the Gly-cisPro motif, important for rejection of L-amino acids motif.

It belongs to the DTD family. Homodimer.

It is found in the cytoplasm. It catalyses the reaction glycyl-tRNA(Ala) + H2O = tRNA(Ala) + glycine + H(+). The enzyme catalyses a D-aminoacyl-tRNA + H2O = a tRNA + a D-alpha-amino acid + H(+). An aminoacyl-tRNA editing enzyme that deacylates mischarged D-aminoacyl-tRNAs. Also deacylates mischarged glycyl-tRNA(Ala), protecting cells against glycine mischarging by AlaRS. Acts via tRNA-based rather than protein-based catalysis; rejects L-amino acids rather than detecting D-amino acids in the active site. By recycling D-aminoacyl-tRNA to D-amino acids and free tRNA molecules, this enzyme counteracts the toxicity associated with the formation of D-aminoacyl-tRNA entities in vivo and helps enforce protein L-homochirality. The chain is D-aminoacyl-tRNA deacylase from Streptococcus gordonii (strain Challis / ATCC 35105 / BCRC 15272 / CH1 / DL1 / V288).